A 78-amino-acid chain; its full sequence is Myrmicitoxin-Ta2a (78 aa).

A signal peptide spans 1-26 (MKLSFLSLALAIIFVTVLIYAPQAEA). Residues 27 to 56 (KALADAVADADADADAAADAVADALADADA) constitute a propeptide that is removed on maturation. Lys77 carries the post-translational modification Lysine amide.

Belongs to the formicidae venom precursor-01 superfamily. Expressed by the venom gland.

It localises to the secreted. Peptide with toxicity towards insects that may also act as antimicrobial peptide. Causes calcium influx in F11 cells (EC(50)=5.8 nM), possibly by modulating sodium channels (Nav). In vivo, is lethal to insects, but does not show toxicity to vertebrates. Intraplantar injection into mice does not induce spontaneous nocifensive behaviors up to a dose of 200 pmol. The protein is Myrmicitoxin-Ta2a of Tetramorium africanum (Fierce ant).